Reading from the N-terminus, the 201-residue chain is Oligoribonuclease (201 aa).

The 165-residue stretch at methionine 5–leucine 169 folds into the Exonuclease domain. Tyrosine 126 is an active-site residue.

This sequence belongs to the oligoribonuclease family.

The protein resides in the cytoplasm. Its function is as follows. 3'-to-5' exoribonuclease specific for small oligoribonucleotides. This is Oligoribonuclease from Streptomyces griseus.